A 71-amino-acid polypeptide reads, in one-letter code: MTDVESVISSFASSARAGRRNALPDIQSSLATGGSPDLALKLEALAVKEDAKMKNEEKDQGQPKKPLDEDK.

The segment at 1–21 (MTDVESVISSFASSARAGRRN) is disordered. A Blocked amino end (Thr) modification is found at Thr2. Ser35 bears the Phosphoserine mark. A disordered region spans residues 51–71 (AKMKNEEKDQGQPKKPLDEDK).

This sequence belongs to the PKI family. As to expression, testis.

Extremely potent competitive inhibitor of cAMP-dependent protein kinase activity, this protein interacts with the catalytic subunit of the enzyme after the cAMP-induced dissociation of its regulatory chains. The protein is cAMP-dependent protein kinase inhibitor beta (Pkib) of Rattus norvegicus (Rat).